The sequence spans 311 residues: Porphobilinogen deaminase (311 aa).

S-(dipyrrolylmethanemethyl)cysteine is present on Cys-242.

It belongs to the HMBS family. As to quaternary structure, monomer. Dipyrromethane serves as cofactor.

The enzyme catalyses 4 porphobilinogen + H2O = hydroxymethylbilane + 4 NH4(+). It functions in the pathway porphyrin-containing compound metabolism; protoporphyrin-IX biosynthesis; coproporphyrinogen-III from 5-aminolevulinate: step 2/4. Functionally, tetrapolymerization of the monopyrrole PBG into the hydroxymethylbilane pre-uroporphyrinogen in several discrete steps. This Vibrio cholerae serotype O1 (strain ATCC 39315 / El Tor Inaba N16961) protein is Porphobilinogen deaminase (hemC).